The primary structure comprises 142 residues: Small ribosomal subunit protein uS9c (142 aa).

Belongs to the universal ribosomal protein uS9 family.

It localises to the plastid. It is found in the chloroplast. This is Small ribosomal subunit protein uS9c (rps9) from Stigeoclonium helveticum (Green alga).